Consider the following 198-residue polypeptide: Beta-crystallin A1-2 (198 aa).

Positions Met1 to Pro13 are N-terminal arm. 2 Beta/gamma crystallin 'Greek key' domains span residues Trp14–Cys53 and Gly54–Cys100. The interval Ser101 to Glu106 is connecting peptide. 2 consecutive Beta/gamma crystallin 'Greek key' domains span residues Ser107–Cys148 and Gly149–Gln197.

It belongs to the beta/gamma-crystallin family. As to quaternary structure, homo/heterodimer, or complexes of higher-order. The structure of beta-crystallin oligomers seems to be stabilized through interactions between the N-terminal arms. The N-terminus is blocked.

Crystallins are the dominant structural components of the vertebrate eye lens. The protein is Beta-crystallin A1-2 of Aquarana catesbeiana (American bullfrog).